Here is a 252-residue protein sequence, read N- to C-terminus: Thiamine thiazole synthase (252 aa).

Residues S35, 54-55 (EK), G62, V126, and 152-154 (HVD) each bind NAD(+). Positions 154 and 169 each coordinate Fe cation. Position 217 (M217) interacts with NAD(+). R227 is a glycine binding site.

Belongs to the THI4 family. In terms of assembly, homooctamer; tetramer of dimers. The cofactor is Fe(2+).

It carries out the reaction hydrogen sulfide + glycine + NAD(+) = ADP-5-ethyl-4-methylthiazole-2-carboxylate + nicotinamide + 3 H2O + H(+). The protein operates within cofactor biosynthesis; thiamine diphosphate biosynthesis. Functionally, involved in the biosynthesis of the thiazole moiety of thiamine. Catalyzes the conversion of NAD and glycine to adenosine diphosphate 5-(2-hydroxyethyl)-4-methylthiazole-2-carboxylate (ADT), an adenylated thiazole intermediate, using free sulfide as a source of sulfur. The sequence is that of Thiamine thiazole synthase from Pyrococcus horikoshii (strain ATCC 700860 / DSM 12428 / JCM 9974 / NBRC 100139 / OT-3).